Here is a 237-residue protein sequence, read N- to C-terminus: tRNA(His) guanylyltransferase (237 aa).

The residue at position 2 (A2) is an N-acetylalanine. D29 and G30 together coordinate Mg(2+). GTP contacts are provided by K32, F33, H34, K44, and D47. A Mg(2+)-binding site is contributed by D77.

It belongs to the tRNA(His) guanylyltransferase family. Homotetramer. Mg(2+) is required as a cofactor.

It carries out the reaction a 5'-end ribonucleotide-tRNA(His) + GTP + ATP + H2O = a 5'-end phospho-guanosine-ribonucleotide-tRNA(His) + AMP + 2 diphosphate + H(+). The enzyme catalyses a 5'-end ribonucleotide-RNA + a ribonucleoside 5'-triphosphate + ATP + H2O = a 5'-end phospho-ribonucleoside-ribonucleotide-RNA + AMP + 2 diphosphate + H(+). In terms of biological role, acts as a tRNA(His) guanylyltransferase that catalyzes 3'-5' addition of a single guanosine residue to the -1 position of tRNA(His), to form a non-Watson-Crick G(-1):A-73 base pair. After addition of G(-1), THG1 removes pyrophosphate from the tRNA 5'-end, generating 5'-monophosphorylated G(-1)-containing tRNA which is important for recognition of tRNA(His) by its cognate histidyl-tRNA synthetase. In addition to the single-G(-1) addition reaction, THG1 polymerizes multiple G residues to the 5'-end of tRNA(His) variants using the 3'-end of the tRNA(His) acceptor stem as a template. In Saccharomyces cerevisiae (strain ATCC 204508 / S288c) (Baker's yeast), this protein is tRNA(His) guanylyltransferase.